A 417-amino-acid polypeptide reads, in one-letter code: Lipoyl synthase, mitochondrial (417 aa).

Residues 35–56 (EANPTDLAGLKRKAKRRPTKLA) form a disordered region. Residues 44-53 (LKRKAKRRPT) are compositionally biased toward basic residues. Residues Cys122, Cys127, Cys133, Cys152, Cys156, Cys159, and Ser367 each coordinate [4Fe-4S] cluster. Residues 137–356 (KKSEATATIM…RDKALEMGFL (220 aa)) form the Radical SAM core domain. Residues 389–417 (IEEQQHDKENNNLLLSKEDEKTTQEKANF) are disordered. The span at 391-417 (EQQHDKENNNLLLSKEDEKTTQEKANF) shows a compositional bias: basic and acidic residues.

The protein belongs to the radical SAM superfamily. Lipoyl synthase family. [4Fe-4S] cluster serves as cofactor.

Its subcellular location is the mitochondrion. It catalyses the reaction [[Fe-S] cluster scaffold protein carrying a second [4Fe-4S](2+) cluster] + N(6)-octanoyl-L-lysyl-[protein] + 2 oxidized [2Fe-2S]-[ferredoxin] + 2 S-adenosyl-L-methionine + 4 H(+) = [[Fe-S] cluster scaffold protein] + N(6)-[(R)-dihydrolipoyl]-L-lysyl-[protein] + 4 Fe(3+) + 2 hydrogen sulfide + 2 5'-deoxyadenosine + 2 L-methionine + 2 reduced [2Fe-2S]-[ferredoxin]. It functions in the pathway protein modification; protein lipoylation via endogenous pathway; protein N(6)-(lipoyl)lysine from octanoyl-[acyl-carrier-protein]: step 2/2. Functionally, catalyzes the radical-mediated insertion of two sulfur atoms into the C-6 and C-8 positions of the octanoyl moiety bound to the lipoyl domains of lipoate-dependent enzymes, thereby converting the octanoylated domains into lipoylated derivatives. The sequence is that of Lipoyl synthase, mitochondrial from Komagataella phaffii (strain GS115 / ATCC 20864) (Yeast).